A 545-amino-acid chain; its full sequence is CTP synthase (545 aa).

Positions 1–266 (MTHFIFVTGG…DDLICERFGF (266 aa)) are amidoligase domain. A CTP-binding site is contributed by S13. A UTP-binding site is contributed by S13. Residues 14-19 (SLGKGI) and D71 each bind ATP. Mg(2+) is bound by residues D71 and E140. CTP is bound by residues 147–149 (DIE), 187–192 (KTKPTQ), and K223. UTP-binding positions include 187 to 192 (KTKPTQ) and K223. 239–241 (KDA) lines the ATP pocket. One can recognise a Glutamine amidotransferase type-1 domain in the interval 292 to 543 (RVAMVGKYVE…IDAAKTQHQK (252 aa)). G353 is an L-glutamine binding site. C380 serves as the catalytic Nucleophile; for glutamine hydrolysis. Residues 381 to 384 (LGMQ), E404, and R471 each bind L-glutamine. Catalysis depends on residues H516 and E518.

This sequence belongs to the CTP synthase family. As to quaternary structure, homotetramer.

The catalysed reaction is UTP + L-glutamine + ATP + H2O = CTP + L-glutamate + ADP + phosphate + 2 H(+). The enzyme catalyses L-glutamine + H2O = L-glutamate + NH4(+). It catalyses the reaction UTP + NH4(+) + ATP = CTP + ADP + phosphate + 2 H(+). It functions in the pathway pyrimidine metabolism; CTP biosynthesis via de novo pathway; CTP from UDP: step 2/2. Allosterically activated by GTP, when glutamine is the substrate; GTP has no effect on the reaction when ammonia is the substrate. The allosteric effector GTP functions by stabilizing the protein conformation that binds the tetrahedral intermediate(s) formed during glutamine hydrolysis. Inhibited by the product CTP, via allosteric rather than competitive inhibition. Its function is as follows. Catalyzes the ATP-dependent amination of UTP to CTP with either L-glutamine or ammonia as the source of nitrogen. Regulates intracellular CTP levels through interactions with the four ribonucleotide triphosphates. The polypeptide is CTP synthase (Acinetobacter baumannii (strain AB307-0294)).